The primary structure comprises 378 residues: Chaperone protein DnaJ (378 aa).

The region spanning Asp6–Gly70 is the J domain. The CR-type zinc-finger motif lies at Gly137–Lys219. Zn(2+) is bound by residues Cys150, Cys153, Cys167, Cys170, Cys193, Cys196, Cys207, and Cys210. CXXCXGXG motif repeat units lie at residues Cys150–Gly157, Cys167–Gly174, Cys193–Gly200, and Cys207–Gly214.

The protein belongs to the DnaJ family. As to quaternary structure, homodimer. Zn(2+) is required as a cofactor.

The protein localises to the cytoplasm. Functionally, participates actively in the response to hyperosmotic and heat shock by preventing the aggregation of stress-denatured proteins and by disaggregating proteins, also in an autonomous, DnaK-independent fashion. Unfolded proteins bind initially to DnaJ; upon interaction with the DnaJ-bound protein, DnaK hydrolyzes its bound ATP, resulting in the formation of a stable complex. GrpE releases ADP from DnaK; ATP binding to DnaK triggers the release of the substrate protein, thus completing the reaction cycle. Several rounds of ATP-dependent interactions between DnaJ, DnaK and GrpE are required for fully efficient folding. Also involved, together with DnaK and GrpE, in the DNA replication of plasmids through activation of initiation proteins. In Lactobacillus delbrueckii subsp. bulgaricus (strain ATCC BAA-365 / Lb-18), this protein is Chaperone protein DnaJ.